A 532-amino-acid polypeptide reads, in one-letter code: Flavin-containing monooxygenase 3 (532 aa).

Residues 9–13 (GAGVS), E32, 40–41 (LW), and 61–62 (NS) each bind FAD. NADP(+) contacts are provided by residues 60–61 (TN) and 195–198 (SGCD). At S401 the chain carries Phosphoserine. The helical transmembrane segment at 512-532 (CHLVKLFVLPVLFIAVFLALI) threads the bilayer.

Belongs to the FMO family. Requires FAD as cofactor.

Its subcellular location is the microsome membrane. It is found in the endoplasmic reticulum membrane. The catalysed reaction is trimethylamine + NADPH + O2 = trimethylamine N-oxide + NADP(+) + H2O. It catalyses the reaction N,N-dimethylaniline + NADPH + O2 + H(+) = N,N-dimethylaniline N-oxide + NADP(+) + H2O. It carries out the reaction hypotaurine + NADPH + O2 + H(+) = taurine + NADP(+) + H2O. The enzyme catalyses (S)-nicotine + NADPH + O2 = trans-(S)-nicotine N(1')-oxide + NADP(+) + H2O. The catalysed reaction is albendazole + NADPH + O2 + H(+) = albendazole S-oxide + NADP(+) + H2O. In terms of biological role, essential hepatic enzyme that catalyzes the oxygenation of a wide variety of nitrogen- and sulfur-containing compounds including drugs as well as dietary compounds. Plays an important role in the metabolism of trimethylamine (TMA), via the production of trimethylamine N-oxide (TMAO) metabolite. TMA is generated by the action of gut microbiota using dietary precursors such as choline, choline containing compounds, betaine or L-carnitine. By regulating TMAO concentration, FMO3 directly impacts both platelet responsiveness and rate of thrombus formation. The protein is Flavin-containing monooxygenase 3 (FMO3) of Canis lupus familiaris (Dog).